The chain runs to 557 residues: Formate--tetrahydrofolate ligase 2 (557 aa).

66–73 (TPAGEGKT) provides a ligand contact to ATP.

The protein belongs to the formate--tetrahydrofolate ligase family.

The enzyme catalyses (6S)-5,6,7,8-tetrahydrofolate + formate + ATP = (6R)-10-formyltetrahydrofolate + ADP + phosphate. It participates in one-carbon metabolism; tetrahydrofolate interconversion. The sequence is that of Formate--tetrahydrofolate ligase 2 from Streptococcus pyogenes serotype M6 (strain ATCC BAA-946 / MGAS10394).